The chain runs to 365 residues: Transcription factor KUA1 (365 aa).

The interval 1 to 21 (MTRRCSHCNHNGHNSRTCPNR) is disordered. The CCHC-type zinc finger occupies 3–20 (RRCSHCNHNGHNSRTCPN). Residues 8-18 (CNHNGHNSRTC) are compositionally biased toward polar residues. The short motif at 24–28 (KLFGV) is the R/KLFGV (transcriptional repression) element. The disordered stretch occupies residues 41–99 (MGNLSHYTGSGSGGHGTGSNTPGSPGDVPDHVAGDGYASEDFVAGSSSSRERKKGTPWT). The 57-residue stretch at 90 to 146 (RERKKGTPWTEEEHRMFLLGLQKLGKGDWRGISRNYVTTRTPTQVASHAQKYFIRQS) folds into the HTH myb-type domain. The H-T-H motif DNA-binding region spans 118-142 (WRGISRNYVTTRTPTQVASHAQKYF). Disordered stretches follow at residues 214 to 254 (SMDS…QPQL) and 321 to 365 (ESNK…IHAL). The span at 220–254 (STTGEPTATAAAASSSSRLEETTQLQSQLQPQPQL) shows a compositional bias: low complexity. Polar residues predominate over residues 343–355 (RQSAFHPNPSSDS).

In terms of tissue distribution, expressed ubiquitously, except in hypocotyls, root tips and lateral root primordia.

The protein resides in the nucleus. Its function is as follows. Transcriptional repressor. Direct regulator of the transcription of peroxidase (Prxs) and reactive oxygen species (ROS)-related genes via the recognition of 5'-ATCACA-3' motif. Binds to 5'-TATCCA-3' motif (TA box) and represses the activity of corresponding promoters (e.g. sugar response genes). Regulates hypocotyl elongation in response to darkness by enhancing auxin accumulation in a phytochrome-interacting factor (PIF) proteins-dependent manner. Promotes lateral roots formation. Promotes cell expansion during leaves development via the modulation of cell wall-located Prxs. Plays a critical role in developmentally regulated and dark-induced onset of leaf senescence by repressing the transcription of several genes involved in chloroplast function and responses to light and auxin. Promotes responses to auxin, abscisic acid (ABA), and ethylene. The sequence is that of Transcription factor KUA1 from Arabidopsis thaliana (Mouse-ear cress).